The primary structure comprises 574 residues: Arginine--tRNA ligase (574 aa).

Residues 126 to 136 (PNIAKRMHVGH) carry the 'HIGH' region motif.

It belongs to the class-I aminoacyl-tRNA synthetase family. Monomer.

The protein resides in the cytoplasm. It carries out the reaction tRNA(Arg) + L-arginine + ATP = L-arginyl-tRNA(Arg) + AMP + diphosphate. This is Arginine--tRNA ligase from Chloroflexus aggregans (strain MD-66 / DSM 9485).